Here is a 141-residue protein sequence, read N- to C-terminus: MNCKILFRKELNDSECELSLLLVGDSDMKEINRLRRGKDKTTDVLSFPLEFDFSPLQKILPKNTSSDQKMFPPIALGEIVISIDTLQKQAKEIGHSEKDEFYRLLVHGFLHLLGYDHERGDKEEHIMKLKEDECLEILQGL.

Residues His-107, His-111, and His-117 each contribute to the Zn(2+) site.

This sequence belongs to the endoribonuclease YbeY family. Zn(2+) serves as cofactor.

It localises to the cytoplasm. Functionally, single strand-specific metallo-endoribonuclease involved in late-stage 70S ribosome quality control and in maturation of the 3' terminus of the 16S rRNA. The protein is Endoribonuclease YbeY of Leptospira interrogans serogroup Icterohaemorrhagiae serovar Lai (strain 56601).